Consider the following 216-residue polypeptide: Probable nicotinate-nucleotide adenylyltransferase (216 aa).

The protein belongs to the NadD family.

It carries out the reaction nicotinate beta-D-ribonucleotide + ATP + H(+) = deamido-NAD(+) + diphosphate. Its pathway is cofactor biosynthesis; NAD(+) biosynthesis; deamido-NAD(+) from nicotinate D-ribonucleotide: step 1/1. Its function is as follows. Catalyzes the reversible adenylation of nicotinate mononucleotide (NaMN) to nicotinic acid adenine dinucleotide (NaAD). This chain is Probable nicotinate-nucleotide adenylyltransferase, found in Klebsiella pneumoniae (strain 342).